A 290-amino-acid chain; its full sequence is Zinc finger matrin-type protein 3 (290 aa).

2 Matrin-type zinc fingers span residues 70–100 (LFCK…KLRN) and 148–178 (DYCK…RLRL). Disordered stretches follow at residues 182–203 (QSHS…EGSE) and 266–290 (ESKQ…GYVQ). A Matrin-type 3 zinc finger spans residues 246–276 (FYCSMCNVGAGEEVEFRQHLESKQHKSKVSE). Positions 266–283 (ESKQHKSKVSEQRYRSEM) are enriched in basic and acidic residues.

As to quaternary structure, interacts with dsRNA. As to expression, constitutively expressed in brain and testis. Also expressed in lung, kidney and spleen after whole body gamma irradiation.

The protein resides in the nucleus. It is found in the nucleolus. In terms of biological role, acts as a bona fide target gene of p53/TP53. May play a role in the TP53-dependent growth regulatory pathway. May contribute to TP53-mediated apoptosis by regulation of TP53 expression and translocation to the nucleus and nucleolus. The sequence is that of Zinc finger matrin-type protein 3 from Mus musculus (Mouse).